Here is a 172-residue protein sequence, read N- to C-terminus: Small ribosomal subunit protein uS5 (172 aa).

Positions 17 to 80 (LREKMISVNR…DEARRKMVKV (64 aa)) constitute an S5 DRBM domain.

This sequence belongs to the universal ribosomal protein uS5 family. Part of the 30S ribosomal subunit. Contacts proteins S4 and S8.

Its function is as follows. With S4 and S12 plays an important role in translational accuracy. Functionally, located at the back of the 30S subunit body where it stabilizes the conformation of the head with respect to the body. This is Small ribosomal subunit protein uS5 from Cupriavidus taiwanensis (strain DSM 17343 / BCRC 17206 / CCUG 44338 / CIP 107171 / LMG 19424 / R1) (Ralstonia taiwanensis (strain LMG 19424)).